We begin with the raw amino-acid sequence, 80 residues long: Sec-independent protein translocase protein TatA (80 aa).

The helical transmembrane segment at 1–21 threads the bilayer; the sequence is MGISMWQLLIVLLIIVLLFGT. The segment at 39 to 80 is disordered; it reads KKAMSDGESEEDKEPKKLSQNESRTIEGSVERNDAKTESKHS. Basic and acidic residues predominate over residues 67–80; that stretch reads SVERNDAKTESKHS.

This sequence belongs to the TatA/E family. As to quaternary structure, the Tat system comprises two distinct complexes: a TatABC complex, containing multiple copies of TatA, TatB and TatC subunits, and a separate TatA complex, containing only TatA subunits. Substrates initially bind to the TatABC complex, which probably triggers association of the separate TatA complex to form the active translocon.

It is found in the cell inner membrane. Its function is as follows. Part of the twin-arginine translocation (Tat) system that transports large folded proteins containing a characteristic twin-arginine motif in their signal peptide across membranes. TatA could form the protein-conducting channel of the Tat system. This chain is Sec-independent protein translocase protein TatA, found in Hahella chejuensis (strain KCTC 2396).